The primary structure comprises 149 residues: Nucleoside diphosphate kinase (149 aa).

Residues Lys-9, Phe-57, Arg-85, Thr-91, Arg-102, and Asn-112 each contribute to the ATP site. His-115 acts as the Pros-phosphohistidine intermediate in catalysis.

The protein belongs to the NDK family. As to quaternary structure, homotetramer. Mg(2+) is required as a cofactor.

Its subcellular location is the cytoplasm. It catalyses the reaction a 2'-deoxyribonucleoside 5'-diphosphate + ATP = a 2'-deoxyribonucleoside 5'-triphosphate + ADP. It carries out the reaction a ribonucleoside 5'-diphosphate + ATP = a ribonucleoside 5'-triphosphate + ADP. Major role in the synthesis of nucleoside triphosphates other than ATP. The ATP gamma phosphate is transferred to the NDP beta phosphate via a ping-pong mechanism, using a phosphorylated active-site intermediate. The chain is Nucleoside diphosphate kinase from Gloeobacter violaceus (strain ATCC 29082 / PCC 7421).